The following is a 363-amino-acid chain: MSYSISQIAKALGAEAAGNLDLTVTGAAEPGDAGHDQLALAMSPKYAEALAKGGARAAILWPGAAWQAMGLEAAIFAARPRLAMAGLTAMLDPGQGVASGIHPSAVIDPSAEIGADVSIGPLTVVGARARIGAGSVIGPHCVIGMDAVLGEGAWLREMVSIGARATIGARFIAQPGARIGGDGFSFVTPEVSGAENARKTMGDQGEAKAQAWTRIHSLGAVEIGDDVEVGANCTVDNGTIRNTCIGDGSKLDNLVHVGHNTRIGRDCLLCGQTGVSGSVEIGNNVVLGGQTGVVDNIYIGDGVIAGGGSKILSNVPAGRVIMGYPAVKMDLHTEIYKAQRRLPRLLRDISALKKAVSKPGPSE.

His-259 (proton acceptor) is an active-site residue.

It belongs to the transferase hexapeptide repeat family. LpxD subfamily. In terms of assembly, homotrimer.

It carries out the reaction a UDP-3-O-[(3R)-3-hydroxyacyl]-alpha-D-glucosamine + a (3R)-hydroxyacyl-[ACP] = a UDP-2-N,3-O-bis[(3R)-3-hydroxyacyl]-alpha-D-glucosamine + holo-[ACP] + H(+). It functions in the pathway bacterial outer membrane biogenesis; LPS lipid A biosynthesis. In terms of biological role, catalyzes the N-acylation of UDP-3-O-acylglucosamine using 3-hydroxyacyl-ACP as the acyl donor. Is involved in the biosynthesis of lipid A, a phosphorylated glycolipid that anchors the lipopolysaccharide to the outer membrane of the cell. This Ruegeria pomeroyi (strain ATCC 700808 / DSM 15171 / DSS-3) (Silicibacter pomeroyi) protein is UDP-3-O-acylglucosamine N-acyltransferase.